A 358-amino-acid chain; its full sequence is Methylthioribose-1-phosphate isomerase (358 aa).

Residues 54–56, arginine 96, and glutamine 205 each bind substrate; that span reads RGA. Aspartate 246 acts as the Proton donor in catalysis. Residue 256–257 participates in substrate binding; sequence GK.

Belongs to the eIF-2B alpha/beta/delta subunits family. MtnA subfamily.

It catalyses the reaction 5-(methylsulfanyl)-alpha-D-ribose 1-phosphate = 5-(methylsulfanyl)-D-ribulose 1-phosphate. It participates in amino-acid biosynthesis; L-methionine biosynthesis via salvage pathway; L-methionine from S-methyl-5-thio-alpha-D-ribose 1-phosphate: step 1/6. Catalyzes the interconversion of methylthioribose-1-phosphate (MTR-1-P) into methylthioribulose-1-phosphate (MTRu-1-P). The chain is Methylthioribose-1-phosphate isomerase from Pseudomonas putida (strain ATCC 47054 / DSM 6125 / CFBP 8728 / NCIMB 11950 / KT2440).